The sequence spans 394 residues: Chalcone synthase 4 (394 aa).

Residue Cys-165 is part of the active site.

Belongs to the thiolase-like superfamily. Chalcone/stilbene synthases family.

It carries out the reaction (E)-4-coumaroyl-CoA + 3 malonyl-CoA + 3 H(+) = 2',4,4',6'-tetrahydroxychalcone + 3 CO2 + 4 CoA. Its pathway is secondary metabolite biosynthesis; flavonoid biosynthesis. The primary product of this enzyme is 4,2',4',6'-tetrahydroxychalcone (also termed naringenin-chalcone or chalcone) which can under specific conditions spontaneously isomerize into naringenin. This is Chalcone synthase 4 (CHS4) from Bromheadia finlaysoniana (Orchid).